The primary structure comprises 389 residues: Flap endonuclease 1 (389 aa).

The N-domain stretch occupies residues 1–105 (MGIKGLTALM…GELAKRKDKR (105 aa)). Residue D34 coordinates Mg(2+). R71 provides a ligand contact to DNA. Positions 87, 159, 161, 180, and 182 each coordinate Mg(2+). An I-domain region spans residues 123 to 254 (EVEKLSKRTV…KTALKLIKEH (132 aa)). E159 lines the DNA pocket. Residues G232 and D234 each coordinate DNA. Residue D234 participates in Mg(2+) binding. The interaction with PCNA stretch occupies residues 338 to 346 (SQNRLESFF). Residues 356-389 (IGKRKVEEKKGKNGKAGLANKKSKGVSGFRRSKN) are disordered.

Belongs to the XPG/RAD2 endonuclease family. FEN1 subfamily. In terms of assembly, interacts with PCNA. Three molecules of FEN1 bind to one PCNA trimer with each molecule binding to one PCNA monomer. PCNA stimulates the nuclease activity without altering cleavage specificity. The cofactor is Mg(2+). Phosphorylated. Phosphorylation upon DNA damage induces relocalization to the nuclear plasma.

It is found in the nucleus. The protein localises to the nucleolus. It localises to the nucleoplasm. Its subcellular location is the mitochondrion. Functionally, structure-specific nuclease with 5'-flap endonuclease and 5'-3' exonuclease activities involved in DNA replication and repair. During DNA replication, cleaves the 5'-overhanging flap structure that is generated by displacement synthesis when DNA polymerase encounters the 5'-end of a downstream Okazaki fragment. It enters the flap from the 5'-end and then tracks to cleave the flap base, leaving a nick for ligation. Also involved in the long patch base excision repair (LP-BER) pathway, by cleaving within the apurinic/apyrimidinic (AP) site-terminated flap. Acts as a genome stabilization factor that prevents flaps from equilibrating into structures that lead to duplications and deletions. Also possesses 5'-3' exonuclease activity on nicked or gapped double-stranded DNA, and exhibits RNase H activity. Also involved in replication and repair of rDNA and in repairing mitochondrial DNA. The protein is Flap endonuclease 1 of Ostreococcus lucimarinus (strain CCE9901).